A 292-amino-acid chain; its full sequence is Ribonuclease Z (292 aa).

Zn(2+)-binding residues include histidine 60, histidine 62, aspartate 64, histidine 65, histidine 132, aspartate 200, and histidine 256. The active-site Proton acceptor is aspartate 64.

This sequence belongs to the RNase Z family. In terms of assembly, homodimer. The cofactor is Zn(2+).

The enzyme catalyses Endonucleolytic cleavage of RNA, removing extra 3' nucleotides from tRNA precursor, generating 3' termini of tRNAs. A 3'-hydroxy group is left at the tRNA terminus and a 5'-phosphoryl group is left at the trailer molecule.. In terms of biological role, zinc phosphodiesterase, which displays some tRNA 3'-processing endonuclease activity. Probably involved in tRNA maturation, by removing a 3'-trailer from precursor tRNA. This is Ribonuclease Z from Sulfolobus acidocaldarius (strain ATCC 33909 / DSM 639 / JCM 8929 / NBRC 15157 / NCIMB 11770).